Reading from the N-terminus, the 513-residue chain is Protein phosphatase 1H (513 aa).

The residue at position 7 (Ser-7) is a Phosphoserine. Positions Ala-77 to Leu-506 constitute a PPM-type phosphatase domain. A disordered region spans residues Ile-110 to Lys-133. Thr-113 is subject to Phosphothreonine. Phosphoserine occurs at positions 123 and 210. An Omega-N-methylarginine modification is found at Arg-212. The residue at position 220 (Ser-220) is a Phosphoserine. Thr-223 is modified (phosphothreonine). At Ser-421 the chain carries Phosphoserine.

The protein belongs to the PP2C family.

It localises to the nucleus. The protein resides in the cytoplasm. The catalysed reaction is O-phospho-L-seryl-[protein] + H2O = L-seryl-[protein] + phosphate. It catalyses the reaction O-phospho-L-threonyl-[protein] + H2O = L-threonyl-[protein] + phosphate. Dephosphorylates CDKN1B at 'Thr-187', thus removing a signal for proteasomal degradation. This chain is Protein phosphatase 1H (Ppm1h), found in Rattus norvegicus (Rat).